The following is a 318-amino-acid chain: Serine protease 41 (318 aa).

Residues 1 to 19 (MGARGALLLALLLARAGLG) form the signal peptide. Residues 20 to 54 (KPGELGALQAGPGAARRPGGGGREEACGHREIHAL) constitute a propeptide that is removed on maturation. Residues 55–297 (VAGGVESARG…YFHWIRRVMS (243 aa)) enclose the Peptidase S1 domain. C80 and C96 are joined by a disulfide. Residues H95 and D147 each act as charge relay system in the active site. 3 cysteine pairs are disulfide-bonded: C181–C255, C215–C234, and C245–C273. N-linked (GlcNAc...) asparagine glycosylation occurs at N211. The active-site Charge relay system is the S249. N-linked (GlcNAc...) asparagine glycosylation occurs at N284. Residue S299 is the site of GPI-anchor amidated serine attachment. A propeptide spans 300-318 (TPRPNPSQLLLLLALLWAP) (removed in mature form).

Belongs to the peptidase S1 family. In terms of processing, N-glycosylated.

The protein localises to the cell membrane. The sequence is that of Serine protease 41 from Homo sapiens (Human).